The chain runs to 618 residues: MEKVFYVTTPIYYVNAEPHLGHAYTTVVADFLARWHRLDGYRTFFLTGTDEHGETVYRAAQAAGEDPKAFVDRVSGRFKRAWDLLGIAYDDFIRTTEERHKKVVQLVLKKVYEAGDIYYGEYEGLYCVSCERFYTEKELVEGLCPIHGRPVERRKEGNYFFRMEKYRPWLQEYIQENPDLIRPEGYRNEVLAMLAEPIGDLSISRPKSRVPWGIPLPWDENHVTYVWFDALLNYVSALDYPEGEAYRTFWPHAWHLIGKDILKPHAVFWPTMLKAAGIPMYRHLNVGGFLLGPDGRKMSKTLGNVVDPFALLEKYGRDALRYYLLREIPYGQDTPVSEEALRTRYEADLADDLGNLVQRTRAMLFRFAEGRIPEPVAGEELAEGTGLAGRLRPLVRELKFHVALEEAMAYVKALNRYINEKKPWELFKKEPEEARAVLYRVVEGLRIASILLTPAMPDKMAELRRALGLKEEVRLEEAERWGLAEPRPIPEEAPVLFPKKEAKVEAKPKEEAWIGIEDFAKVELRVAEVLAAEKHPNADRLLVLRLSLGNEERTVVSGIAKWYRPEELVGKKVVLVANLKPAKLRGIESQGMILAAQEGEALALVTVEGEVPPGAVVK.

Positions Tyr-12–His-22 match the 'HIGH' region motif. Zn(2+)-binding residues include Cys-127, Cys-130, Cys-144, and His-147. The short motif at Lys-297–Thr-301 is the 'KMSKS' region element. Lys-300 contributes to the ATP binding site. Residues Asp-518–Lys-618 form the tRNA-binding domain.

Belongs to the class-I aminoacyl-tRNA synthetase family. MetG type 2A subfamily. Homodimer. Requires Zn(2+) as cofactor.

It localises to the cytoplasm. The catalysed reaction is tRNA(Met) + L-methionine + ATP = L-methionyl-tRNA(Met) + AMP + diphosphate. Its function is as follows. Is required not only for elongation of protein synthesis but also for the initiation of all mRNA translation through initiator tRNA(fMet) aminoacylation. The polypeptide is Methionine--tRNA ligase (metG) (Thermus thermophilus (strain ATCC 27634 / DSM 579 / HB8)).